A 1375-amino-acid polypeptide reads, in one-letter code: DNA-directed RNA polymerase subunit beta (1375 aa).

It belongs to the RNA polymerase beta chain family. In terms of assembly, the RNAP catalytic core consists of 2 alpha, 1 beta, 1 beta' and 1 omega subunit. When a sigma factor is associated with the core the holoenzyme is formed, which can initiate transcription.

The catalysed reaction is RNA(n) + a ribonucleoside 5'-triphosphate = RNA(n+1) + diphosphate. In terms of biological role, DNA-dependent RNA polymerase catalyzes the transcription of DNA into RNA using the four ribonucleoside triphosphates as substrates. The sequence is that of DNA-directed RNA polymerase subunit beta from Coxiella burnetii (strain RSA 331 / Henzerling II).